Reading from the N-terminus, the 367-residue chain is GPN-loop GTPase 1 (367 aa).

Residues 15-22 (GMAGSGKT) and 18-23 (GSGKTT) each bind GTP. The Gly-Pro-Asn (GPN)-loop; involved in dimer interface signature appears at 75–77 (GPN). Residue 178–181 (NKCD) coordinates GTP. Positions 247–290 (EGMDDFLEAVKAKVKEYEEEYVPEMERMKEIQRQTKERQKEAQL) form a coiled coil. Positions 306-332 (VGLTVSDAEDEYNGELVDPDEDDGLTA) are disordered. Phosphoserine is present on Ser-311. Residues 312–332 (DAEDEYNGELVDPDEDDGLTA) show a composition bias toward acidic residues.

This sequence belongs to the GPN-loop GTPase family. In terms of assembly, heterodimers with gpn2 or fet5/gpn3. Binds to RNA polymerase II (RNAPII).

The protein localises to the cytoplasm. Its function is as follows. Small GTPase required for proper nuclear import of RNA polymerase II (RNAPII). May act at an RNAP assembly step prior to nuclear import. The chain is GPN-loop GTPase 1 from Schizosaccharomyces pombe (strain 972 / ATCC 24843) (Fission yeast).